The primary structure comprises 599 residues: UvrABC system protein C (599 aa).

The region spanning 15–93 (DNPGVYQYYD…IKTLQPRYNI (79 aa)) is the GIY-YIG domain. Residues 207–242 (KDSMKDFKKVMTNLAQNMHFEEAQKIKEKIEILENY) form the UVR domain.

This sequence belongs to the UvrC family. In terms of assembly, interacts with UvrB in an incision complex.

It localises to the cytoplasm. Its function is as follows. The UvrABC repair system catalyzes the recognition and processing of DNA lesions. UvrC both incises the 5' and 3' sides of the lesion. The N-terminal half is responsible for the 3' incision and the C-terminal half is responsible for the 5' incision. The chain is UvrABC system protein C from Flavobacterium psychrophilum (strain ATCC 49511 / DSM 21280 / CIP 103535 / JIP02/86).